A 215-amino-acid chain; its full sequence is Somatotropin (215 aa).

The signal sequence occupies residues 1-25; that stretch reads MAPGMRVCLLLLIAFTLLGPQRAAA. Residue histidine 44 coordinates Zn(2+). The residue at position 130 (serine 130) is a Phosphoserine. A Zn(2+)-binding site is contributed by glutamate 197.

This sequence belongs to the somatotropin/prolactin family.

Its subcellular location is the secreted. In terms of biological role, plays an important role in growth control. Its major role in stimulating body growth is to stimulate the liver and other tissues to secrete IGF1. It stimulates both the differentiation and proliferation of myoblasts. It also stimulates amino acid uptake and protein synthesis in muscle and other tissues. This chain is Somatotropin (GH1), found in Monodelphis domestica (Gray short-tailed opossum).